The chain runs to 229 residues: Thylakoid lumenal 19 kDa protein, chloroplastic (229 aa).

The protein resides in the plastid. The protein localises to the chloroplast thylakoid lumen. This is Thylakoid lumenal 19 kDa protein, chloroplastic from Arabidopsis thaliana (Mouse-ear cress).